The primary structure comprises 249 residues: 2-dehydro-3-deoxy-L-rhamnonate dehydrogenase (NAD(+)) (249 aa).

Tyrosine 156 functions as the Proton acceptor in the catalytic mechanism.

It belongs to the short-chain dehydrogenases/reductases (SDR) family. Homotetramer.

It carries out the reaction 2-dehydro-3-deoxy-L-rhamnonate + NAD(+) = 2,4-didehydro-3-deoxy-L-rhamnonate + NADH + H(+). Its pathway is carbohydrate degradation; L-rhamnose degradation. Functionally, catalyzes the NAD(+)-dependent dehydrogenation of 2-dehydro-3-deoxy-L-rhamnonate to form 2,4-didehydro-3-deoxy-L-rhamnonate. Does not show any detectable activity in the presence of NADP(+). Catalyzes the fourth step in an alternative pathway for rhamnose utilization that does not involve phosphorylated intermediates. The sequence is that of 2-dehydro-3-deoxy-L-rhamnonate dehydrogenase (NAD(+)) from Sphingomonas sp. (strain SKA58).